Reading from the N-terminus, the 111-residue chain is PHD finger-like domain-containing protein 5A (111 aa).

Belongs to the PHF5 family.

The protein is PHD finger-like domain-containing protein 5A of Drosophila melanogaster (Fruit fly).